We begin with the raw amino-acid sequence, 430 residues long: tRNA(Ile)-lysidine synthase (430 aa).

ATP is bound at residue 27–32; the sequence is SGGSDS.

The protein belongs to the tRNA(Ile)-lysidine synthase family.

It localises to the cytoplasm. The catalysed reaction is cytidine(34) in tRNA(Ile2) + L-lysine + ATP = lysidine(34) in tRNA(Ile2) + AMP + diphosphate + H(+). Its function is as follows. Ligates lysine onto the cytidine present at position 34 of the AUA codon-specific tRNA(Ile) that contains the anticodon CAU, in an ATP-dependent manner. Cytidine is converted to lysidine, thus changing the amino acid specificity of the tRNA from methionine to isoleucine. The sequence is that of tRNA(Ile)-lysidine synthase from Rickettsia akari (strain Hartford).